A 188-amino-acid polypeptide reads, in one-letter code: Peptide deformylase (188 aa).

Fe cation contacts are provided by Cys-109 and His-152. Glu-153 is a catalytic residue. His-156 is a Fe cation binding site.

Belongs to the polypeptide deformylase family. Fe(2+) is required as a cofactor.

It carries out the reaction N-terminal N-formyl-L-methionyl-[peptide] + H2O = N-terminal L-methionyl-[peptide] + formate. Its function is as follows. Removes the formyl group from the N-terminal Met of newly synthesized proteins. Requires at least a dipeptide for an efficient rate of reaction. N-terminal L-methionine is a prerequisite for activity but the enzyme has broad specificity at other positions. This Chloroflexus aggregans (strain MD-66 / DSM 9485) protein is Peptide deformylase.